Consider the following 374-residue polypeptide: Homoserine O-acetyltransferase (374 aa).

One can recognise an AB hydrolase-1 domain in the interval 45–353 (NAILVLHALT…PYGHDAFLIE (309 aa)). Catalysis depends on S151, which acts as the Nucleophile. A substrate-binding site is contributed by R220. Catalysis depends on residues D314 and H347. D348 is a binding site for substrate.

It belongs to the AB hydrolase superfamily. MetX family. Homodimer.

Its subcellular location is the cytoplasm. The catalysed reaction is L-homoserine + acetyl-CoA = O-acetyl-L-homoserine + CoA. It participates in amino-acid biosynthesis; L-methionine biosynthesis via de novo pathway; O-acetyl-L-homoserine from L-homoserine: step 1/1. In terms of biological role, transfers an acetyl group from acetyl-CoA to L-homoserine, forming acetyl-L-homoserine. The sequence is that of Homoserine O-acetyltransferase from Moorella thermoacetica (strain ATCC 39073 / JCM 9320).